The primary structure comprises 867 residues: Armadillo repeat-containing protein 2 (867 aa).

Disordered stretches follow at residues M1–F115 and T214–K252. Composition is skewed to polar residues over residues P18–E28, V40–E50, and S60–P69. Composition is skewed to low complexity over residues S70–S81 and S234–S243. ARM repeat units lie at residues I262–E301, N304–V344, E363–F403, L408–V449, S462–S503, D506–A547, Q551–E589, H591–I616, G619–Y662, Q664–Q705, H707–V746, and K748–E790.

Expressed at higher level in testis.

Functionally, required for sperm flagellum axoneme organization and function. Involved in axonemal central pair complex assembly and/or stability. The polypeptide is Armadillo repeat-containing protein 2 (Homo sapiens (Human)).